Consider the following 383-residue polypeptide: Opsin Rh4 (383 aa).

Residues 1–57 (MDIAGSLCNASEGPVLRPEARVSGNGDLQFLGWNVPPDQIQHIPEHWLTQLEPPASM) are Extracellular-facing. The N-linked (GlcNAc...) asparagine glycan is linked to Asn-9. A helical transmembrane segment spans residues 58 to 82 (HYMLGVFYIFLFCASTVGNGMVIWI). Over 83-94 (FSTSKALRTPSN) the chain is Cytoplasmic. The chain crosses the membrane as a helical span at residues 95 to 117 (MFVLNLAVFDFIMCLKAPIFIYN). The Extracellular portion of the chain corresponds to 118–133 (SFHRGFALGNTGCQIF). Cys-130 and Cys-207 are joined by a disulfide. The helical transmembrane segment at 134–153 (AAIGSYSGIGAGMTNAAIGY) threads the bilayer. The Cytoplasmic segment spans residues 154-171 (DRLNVITKPMNRNMTFTK). A helical transmembrane segment spans residues 172-196 (AIIMNVIIWLYCTPWVVLPLTQFWD). Residues 197–220 (RFVPEGYLTSCTFDYLTDNFDTRL) lie on the Extracellular side of the membrane. A helical transmembrane segment spans residues 221-248 (FVGTIFFFSFVCPTLMIIYYYSQIVGHV). Residues 249-284 (FSHEKALREQAKKMNVESLRSNVDKSKDTAEIRIAK) are Cytoplasmic-facing. The helical transmembrane segment at 285-308 (AAITICFLFFVSWTPYGVMSLIGA) threads the bilayer. Residues 309 to 316 (FGDKSLLT) are Extracellular-facing. Residues 317–341 (PGATMIPACTCKLVACIDPFVYAIS) form a helical membrane-spanning segment. Position 328 is an N6-(retinylidene)lysine (Lys-328). Over 342–383 (HPRYRMELQKRCPWLAIDEKAPESSSAASTTTTQEQQQTTAA) the chain is Cytoplasmic. Positions 361 to 383 (KAPESSSAASTTTTQEQQQTTAA) are disordered. Positions 364-383 (ESSSAASTTTTQEQQQTTAA) are enriched in low complexity.

Belongs to the G-protein coupled receptor 1 family. Opsin subfamily. In terms of processing, phosphorylated on some or all of the serine and threonine residues present in the C-terminal region.

It localises to the membrane. Functionally, visual pigments are the light-absorbing molecules that mediate vision. They consist of an apoprotein, opsin, covalently linked to cis-retinal. The polypeptide is Opsin Rh4 (Rh4) (Drosophila virilis (Fruit fly)).